Here is a 149-residue protein sequence, read N- to C-terminus: D-aminoacyl-tRNA deacylase (149 aa).

The Gly-cisPro motif, important for rejection of L-amino acids signature appears at 137 to 138 (GP).

This sequence belongs to the DTD family. In terms of assembly, homodimer.

It localises to the cytoplasm. It catalyses the reaction glycyl-tRNA(Ala) + H2O = tRNA(Ala) + glycine + H(+). The catalysed reaction is a D-aminoacyl-tRNA + H2O = a tRNA + a D-alpha-amino acid + H(+). Functionally, an aminoacyl-tRNA editing enzyme that deacylates mischarged D-aminoacyl-tRNAs. Also deacylates mischarged glycyl-tRNA(Ala), protecting cells against glycine mischarging by AlaRS. Acts via tRNA-based rather than protein-based catalysis; rejects L-amino acids rather than detecting D-amino acids in the active site. By recycling D-aminoacyl-tRNA to D-amino acids and free tRNA molecules, this enzyme counteracts the toxicity associated with the formation of D-aminoacyl-tRNA entities in vivo and helps enforce protein L-homochirality. This Thermosipho africanus (strain TCF52B) protein is D-aminoacyl-tRNA deacylase.